Reading from the N-terminus, the 299-residue chain is MSESNRLRIAIQKSGRLSKESLKLLKSCGVKFNINEQRLIAHSDNMPIDLLRVRDDDIPGLVMDGVVDLGFIGENVLEEEQIERQSLNKPSECIKLRELDFGACRLSLAVPNEFNYQDASSLEGVRIATSYPNILRRYMQQKGISYNDCMLKGSVEVAPRAGLSDAICDLVSTGATLEANGLYETEVIYQSTACLIQSTTSQPDDKQALINKILSRINGVVRAKESKYILLHAPTETLEQIVALLPGAENPTVLPLNDDTNRVAIHAVSTEDLFWDTMEQLTQLGASSILVMPIEKMMG.

It belongs to the ATP phosphoribosyltransferase family. Long subfamily. The cofactor is Mg(2+).

Its subcellular location is the cytoplasm. The enzyme catalyses 1-(5-phospho-beta-D-ribosyl)-ATP + diphosphate = 5-phospho-alpha-D-ribose 1-diphosphate + ATP. The protein operates within amino-acid biosynthesis; L-histidine biosynthesis; L-histidine from 5-phospho-alpha-D-ribose 1-diphosphate: step 1/9. With respect to regulation, feedback inhibited by histidine. In terms of biological role, catalyzes the condensation of ATP and 5-phosphoribose 1-diphosphate to form N'-(5'-phosphoribosyl)-ATP (PR-ATP). Has a crucial role in the pathway because the rate of histidine biosynthesis seems to be controlled primarily by regulation of HisG enzymatic activity. This is ATP phosphoribosyltransferase from Shewanella piezotolerans (strain WP3 / JCM 13877).